The primary structure comprises 309 residues: Wnt inhibitor of Dorsal protein (309 aa).

A signal peptide spans 1-16; that stretch reads MIFAITFFMGITSTLA. 10 disulfides stabilise this stretch: cysteine 51-cysteine 62, cysteine 102-cysteine 110, cysteine 112-cysteine 121, cysteine 162-cysteine 179, cysteine 164-cysteine 174, cysteine 232-cysteine 269, cysteine 248-cysteine 262, cysteine 266-cysteine 308, cysteine 284-cysteine 299, and cysteine 286-cysteine 296.

The protein belongs to the Wnt family.

The protein localises to the secreted. The protein resides in the extracellular space. It is found in the extracellular matrix. Its function is as follows. Binds as a ligand to a family of frizzled seven-transmembrane receptors and acts through a cascade of genes on the nucleus. The polypeptide is Wnt inhibitor of Dorsal protein (wntD) (Drosophila melanogaster (Fruit fly)).